The sequence spans 267 residues: Phosphatidylserine decarboxylase proenzyme (267 aa).

Residues Asp-78, His-132, and Ser-236 each act as charge relay system; for autoendoproteolytic cleavage activity in the active site. The active-site Schiff-base intermediate with substrate; via pyruvic acid; for decarboxylase activity is the Ser-236. Residue Ser-236 is modified to Pyruvic acid (Ser); by autocatalysis.

The protein belongs to the phosphatidylserine decarboxylase family. PSD-B subfamily. Prokaryotic type I sub-subfamily. In terms of assembly, heterodimer of a large membrane-associated beta subunit and a small pyruvoyl-containing alpha subunit. Requires pyruvate as cofactor. In terms of processing, is synthesized initially as an inactive proenzyme. Formation of the active enzyme involves a self-maturation process in which the active site pyruvoyl group is generated from an internal serine residue via an autocatalytic post-translational modification. Two non-identical subunits are generated from the proenzyme in this reaction, and the pyruvate is formed at the N-terminus of the alpha chain, which is derived from the carboxyl end of the proenzyme. The autoendoproteolytic cleavage occurs by a canonical serine protease mechanism, in which the side chain hydroxyl group of the serine supplies its oxygen atom to form the C-terminus of the beta chain, while the remainder of the serine residue undergoes an oxidative deamination to produce ammonia and the pyruvoyl prosthetic group on the alpha chain. During this reaction, the Ser that is part of the protease active site of the proenzyme becomes the pyruvoyl prosthetic group, which constitutes an essential element of the active site of the mature decarboxylase.

It is found in the cell membrane. The enzyme catalyses a 1,2-diacyl-sn-glycero-3-phospho-L-serine + H(+) = a 1,2-diacyl-sn-glycero-3-phosphoethanolamine + CO2. The protein operates within phospholipid metabolism; phosphatidylethanolamine biosynthesis; phosphatidylethanolamine from CDP-diacylglycerol: step 2/2. Its function is as follows. Catalyzes the formation of phosphatidylethanolamine (PtdEtn) from phosphatidylserine (PtdSer). The chain is Phosphatidylserine decarboxylase proenzyme from Helicobacter pylori (strain ATCC 700392 / 26695) (Campylobacter pylori).